The chain runs to 382 residues: uncharacterized protein (382 aa).

12 helical membrane passes run 8–28 (VMLL…LNTL), 45–65 (MVSS…GYLI), 75–95 (YLAS…VGFW), 102–122 (FIAG…LMCS), 131–151 (LLAA…LLVS), 157–177 (LLHV…PLLF), 204–224 (LGVN…GLMP), 231–251 (GMAN…GILG), 270–290 (VQVF…AMAP), 291–311 (ALFI…AWAC), 325–345 (ALLL…AMLM), and 349–369 (SDNL…LMLL).

It belongs to the major facilitator superfamily. YcaD (TC 2.A.1.26) family.

Its subcellular location is the cell inner membrane. This is an uncharacterized protein from Salmonella newport (strain SL254).